We begin with the raw amino-acid sequence, 1403 residues long: Baculoviral IAP repeat-containing protein 1e (1403 aa).

BIR repeat units follow at residues 60–127 (EAKR…CEFL), 159–227 (EEAR…CEFL), and 278–345 (EELR…CVFL). Residues C315, C318, H335, and C342 each contribute to the Zn(2+) site. Positions 464–759 (SVMCVEGETG…EFLAAVRLTE (296 aa)) constitute an NACHT domain. Residue 473–478 (GSGKTT) coordinates ATP.

Component of the NLRC4 inflammasome, at least composed of NLRC4, caspase-1 (CASP1) and some NAIP protein. Flagellin binding by NAIP5 triggers assembly of the inflammasome, a huge complex that contains a single NAIP5 chain and multiple copies of NLRC4. In terms of assembly, (Microbial infection) Interacts with S.typhimurium (Salmonella) flagellin. As to quaternary structure, (Microbial infection) Interacts with L.pneumophila flagellin. Detected in macrophages (at protein level).

Sensor component of the NLRC4 inflammasome that specifically recognizes and binds flagellin from pathogenic bacteria such as Legionella or Salmonella. Association of pathogenic bacteria proteins drives in turn drive assembly and activation of the NLRC4 inflammasome, promoting caspase-1 activation, cytokine production and macrophage pyroptosis. The NLRC4 inflammasome is activated as part of the innate immune response to a range of intracellular bacteria. The NLRC4 inflammasome senses Gram-negative bacteria such as L.pneumophila and P.aeruginosa, enteric pathogens S.typhimurium (Salmonella) and S.flexneri. May contribute to prevent motor-neuron apoptosis induced by a variety of signals. The polypeptide is Baculoviral IAP repeat-containing protein 1e (Mus musculus (Mouse)).